A 225-amino-acid chain; its full sequence is 3-dehydroquinate dehydratase (225 aa).

3-dehydroquinate is bound by residues Ser6, 30-32, and Arg62; that span reads EWR. Catalysis depends on His118, which acts as the Proton donor/acceptor. Residue Lys143 is the Schiff-base intermediate with substrate of the active site. 3-dehydroquinate-binding residues include Arg186, Thr205, and Gln209.

It belongs to the type-I 3-dehydroquinase family. In terms of assembly, homodimer.

The catalysed reaction is 3-dehydroquinate = 3-dehydroshikimate + H2O. Its pathway is metabolic intermediate biosynthesis; chorismate biosynthesis; chorismate from D-erythrose 4-phosphate and phosphoenolpyruvate: step 3/7. Functionally, involved in the third step of the chorismate pathway, which leads to the biosynthesis of aromatic amino acids. Catalyzes the cis-dehydration of 3-dehydroquinate (DHQ) and introduces the first double bond of the aromatic ring to yield 3-dehydroshikimate. This Streptococcus gordonii (strain Challis / ATCC 35105 / BCRC 15272 / CH1 / DL1 / V288) protein is 3-dehydroquinate dehydratase.